Here is a 137-residue protein sequence, read N- to C-terminus: Large ribosomal subunit protein uL16 (137 aa).

This sequence belongs to the universal ribosomal protein uL16 family. As to quaternary structure, part of the 50S ribosomal subunit.

Binds 23S rRNA and is also seen to make contacts with the A and possibly P site tRNAs. This is Large ribosomal subunit protein uL16 from Leuconostoc mesenteroides subsp. mesenteroides (strain ATCC 8293 / DSM 20343 / BCRC 11652 / CCM 1803 / JCM 6124 / NCDO 523 / NBRC 100496 / NCIMB 8023 / NCTC 12954 / NRRL B-1118 / 37Y).